The chain runs to 217 residues: Adenylate kinase (217 aa).

11–16 is an ATP binding site; sequence GSGKGT. The NMP stretch occupies residues 31-61; sequence STGTMLRQALTRSTHKSYELHKNIMHTGDLV. Residues Thr32, Arg37, 59-61, 87-90, and Gln94 contribute to the AMP site; these read DLV and GFPR. Positions 124 to 161 are LID; that stretch reads GRRIHVGSGRTYHIKFNPPRNYGLDDITGEILTTRKDD. ATP-binding positions include Arg125 and 134 to 135; that span reads TY. AMP is bound by residues Arg158 and Arg169. ATP is bound at residue Arg202.

This sequence belongs to the adenylate kinase family. As to quaternary structure, monomer.

The protein localises to the cytoplasm. It catalyses the reaction AMP + ATP = 2 ADP. It functions in the pathway purine metabolism; AMP biosynthesis via salvage pathway; AMP from ADP: step 1/1. Functionally, catalyzes the reversible transfer of the terminal phosphate group between ATP and AMP. Plays an important role in cellular energy homeostasis and in adenine nucleotide metabolism. The chain is Adenylate kinase from Blochmanniella pennsylvanica (strain BPEN).